The sequence spans 502 residues: NAD(P)H-quinone oxidoreductase chain 4, chloroplastic (502 aa).

The next 13 membrane-spanning stretches (helical) occupy residues 4 to 24 (YPWLTIIVLLPIPAGLLIPLL), 39 to 59 (LGICLLEFLLITHTFCYHFDI), 89 to 109 (IGLTPLTGFVTTLATLAAWPV), 115 to 132 (LFHSSMLAMYSGQVGLFT), 136 to 156 (ILLFFLMWELELIPVYLLLSM), 169 to 189 (FILYTAGGSIPLLIGALTMGL), 209 to 229 (IALEIVLYLSFFVAYAVKLPI), 244 to 264 (HYSTCMLLAGILLKMGGYGLI), 276 to 296 (SIFAPWLVIVGAFQIVYAASI), 315 to 335 (MGFVLIGIGSATNIGLNGAIL), 387 to 407 (SLALPGTSGFAAESMVFPGIV), 418 to 438 (IIITIVEAIGIILTPIYLLSM), and 466 to 486 (IFISICLLLPTIGIGLYPNLI).

Belongs to the complex I subunit 4 family.

The protein resides in the plastid. The protein localises to the chloroplast thylakoid membrane. It catalyses the reaction a plastoquinone + NADH + (n+1) H(+)(in) = a plastoquinol + NAD(+) + n H(+)(out). It carries out the reaction a plastoquinone + NADPH + (n+1) H(+)(in) = a plastoquinol + NADP(+) + n H(+)(out). This chain is NAD(P)H-quinone oxidoreductase chain 4, chloroplastic, found in Huperzia lucidula (Shining clubmoss).